The sequence spans 417 residues: Histidine--tRNA ligase (417 aa).

The protein belongs to the class-II aminoacyl-tRNA synthetase family.

The protein resides in the cytoplasm. It catalyses the reaction tRNA(His) + L-histidine + ATP = L-histidyl-tRNA(His) + AMP + diphosphate + H(+). The chain is Histidine--tRNA ligase from Pyrobaculum neutrophilum (strain DSM 2338 / JCM 9278 / NBRC 100436 / V24Sta) (Thermoproteus neutrophilus).